The following is a 185-amino-acid chain: Guanylate kinase (185 aa).

One can recognise a Guanylate kinase-like domain in the interval 3–181 (TRMIIVAAPS…SYGEFKKIVE (179 aa)). 10–17 (APSGAGKS) lines the ATP pocket.

The protein belongs to the guanylate kinase family.

It is found in the cytoplasm. The catalysed reaction is GMP + ATP = GDP + ADP. In terms of biological role, essential for recycling GMP and indirectly, cGMP. This Bdellovibrio bacteriovorus (strain ATCC 15356 / DSM 50701 / NCIMB 9529 / HD100) protein is Guanylate kinase.